The chain runs to 75 residues: ATP synthase subunit c (75 aa).

The next 2 membrane-spanning stretches (helical) occupy residues 13 to 33 (LSVIGYGIGTLGPGIGLGILF) and 55 to 75 (FIGLALVEVLALIGFVAALII).

Belongs to the ATPase C chain family. As to quaternary structure, F-type ATPases have 2 components, F(1) - the catalytic core - and F(0) - the membrane proton channel. F(1) has five subunits: alpha(3), beta(3), gamma(1), delta(1), epsilon(1). F(0) has three main subunits: a(1), b(2) and c(10-14). The alpha and beta chains form an alternating ring which encloses part of the gamma chain. F(1) is attached to F(0) by a central stalk formed by the gamma and epsilon chains, while a peripheral stalk is formed by the delta and b chains.

It is found in the cell membrane. Functionally, f(1)F(0) ATP synthase produces ATP from ADP in the presence of a proton or sodium gradient. F-type ATPases consist of two structural domains, F(1) containing the extramembraneous catalytic core and F(0) containing the membrane proton channel, linked together by a central stalk and a peripheral stalk. During catalysis, ATP synthesis in the catalytic domain of F(1) is coupled via a rotary mechanism of the central stalk subunits to proton translocation. Key component of the F(0) channel; it plays a direct role in translocation across the membrane. A homomeric c-ring of between 10-14 subunits forms the central stalk rotor element with the F(1) delta and epsilon subunits. The sequence is that of ATP synthase subunit c from Bifidobacterium longum (strain DJO10A).